Here is a 222-residue protein sequence, read N- to C-terminus: 7-cyano-7-deazaguanine synthase (222 aa).

An ATP-binding site is contributed by 11–21 (FSGGQDSTTCL). Residues cysteine 187, cysteine 195, cysteine 198, and cysteine 201 each contribute to the Zn(2+) site.

This sequence belongs to the QueC family. Zn(2+) is required as a cofactor.

It carries out the reaction 7-carboxy-7-deazaguanine + NH4(+) + ATP = 7-cyano-7-deazaguanine + ADP + phosphate + H2O + H(+). Its pathway is purine metabolism; 7-cyano-7-deazaguanine biosynthesis. Functionally, catalyzes the ATP-dependent conversion of 7-carboxy-7-deazaguanine (CDG) to 7-cyano-7-deazaguanine (preQ(0)). This is 7-cyano-7-deazaguanine synthase from Actinobacillus pleuropneumoniae serotype 3 (strain JL03).